A 159-amino-acid polypeptide reads, in one-letter code: NADH-quinone oxidoreductase subunit I (159 aa).

4Fe-4S ferredoxin-type domains lie at 51-80 (RRYE…IEAD) and 90-119 (TRYD…EGPN). Residues C60, C63, C66, C70, C99, C102, C105, and C109 each contribute to the [4Fe-4S] cluster site.

It belongs to the complex I 23 kDa subunit family. In terms of assembly, NDH-1 is composed of 14 different subunits. Subunits NuoA, H, J, K, L, M, N constitute the membrane sector of the complex. Requires [4Fe-4S] cluster as cofactor.

The protein localises to the cell inner membrane. It carries out the reaction a quinone + NADH + 5 H(+)(in) = a quinol + NAD(+) + 4 H(+)(out). In terms of biological role, NDH-1 shuttles electrons from NADH, via FMN and iron-sulfur (Fe-S) centers, to quinones in the respiratory chain. The immediate electron acceptor for the enzyme in this species is believed to be ubiquinone. Couples the redox reaction to proton translocation (for every two electrons transferred, four hydrogen ions are translocated across the cytoplasmic membrane), and thus conserves the redox energy in a proton gradient. In Rickettsia rickettsii (strain Sheila Smith), this protein is NADH-quinone oxidoreductase subunit I.